A 191-amino-acid chain; its full sequence is Imidazoleglycerol-phosphate dehydratase (191 aa).

It belongs to the imidazoleglycerol-phosphate dehydratase family.

The protein localises to the cytoplasm. The enzyme catalyses D-erythro-1-(imidazol-4-yl)glycerol 3-phosphate = 3-(imidazol-4-yl)-2-oxopropyl phosphate + H2O. It functions in the pathway amino-acid biosynthesis; L-histidine biosynthesis; L-histidine from 5-phospho-alpha-D-ribose 1-diphosphate: step 6/9. The polypeptide is Imidazoleglycerol-phosphate dehydratase (Methanococcoides burtonii (strain DSM 6242 / NBRC 107633 / OCM 468 / ACE-M)).